We begin with the raw amino-acid sequence, 1143 residues long: Probable ATP-dependent RNA helicase DHX34 (1143 aa).

2 disordered regions span residues 1–24 (MPPP…EEEA) and 75–94 (TSRK…PALA). The span at 76 to 85 (SRKEEKDPGQ) shows a compositional bias: basic and acidic residues. The Helicase ATP-binding domain maps to 172 to 332 (LQTLKEHQVV…FSNAPVVQVP (161 aa)). 185–192 (GDTGCGKS) lines the ATP pocket. A DEAH box motif is present at residues 279-282 (DEVH). The Helicase C-terminal domain occupies 368 to 536 (SIDHKYPPEE…SLVLQMKSMS (169 aa)). A negatively regulates interaction with UPF1 region spans residues 701–955 (QAAQVGDSYS…LRARWESALD (255 aa)). The tract at residues 724–766 (LKRQHEEGAGRRRKVLRLQEEQDGGSSDEDRAGPAPPGASDGV) is disordered. Ser-749 and Ser-750 each carry phosphoserine. Residues 810 to 1143 (PQLAVPDAFN…EVLRHRKQHV (334 aa)) are required for phosphorylation of UPF1. Not required for interaction with UPF1. A required for the interaction with SMG1 and subsequent phosphorylation of UPF1 region spans residues 957 to 1143 (QLAHQAQQQL…EVLRHRKQHV (187 aa)).

Belongs to the DEAD box helicase family. DEAH subfamily. As to quaternary structure, forms a complex with RUVBL1 and RUVBL2. Part of a complex composed of SMG1, DHX34 and UPF1; within the complex DHX34 acts as a scaffolding protein to facilitate SMG1 phosphorylation of UPF1. Interacts with UPF1, MOV10, EIF4A3, XRN2, SMG6, SMG7, SMG9, UPF3A, UPF3B, CASC3/MLN51, XRN1, DIS3 and DCP1A; the interactions are RNA-independent. Interacts with NCBP1/CPB80; the interaction is RNA-dependent. Interacts (via C-terminus) with SMG1; the interaction is RNA-independent. In terms of tissue distribution, expressed in whole blood, testis and spleen. Also expressed in the brain.

The catalysed reaction is ATP + H2O = ADP + phosphate + H(+). Its function is as follows. Probable ATP-binding RNA helicase required for nonsense-mediated decay (NMD) degradation of mRNA transcripts containing premature stop codons. Promotes the phosphorylation of UPF1 along with its interaction with key NMD pathway proteins UPF2 and EIF4A3. Interaction with the RUVBL1-RUVBL2 complex results in loss of nucleotide binding ability and ATP hydrolysis of the complex. Negatively regulates the nucleotide binding ability and ATP hydrolysis of the RUVBL1-RUVBL2 complex via induction of N-terminus conformation changes of the RUVBL2 subunits. In Homo sapiens (Human), this protein is Probable ATP-dependent RNA helicase DHX34.